Consider the following 332-residue polypeptide: Biotin synthase (332 aa).

Residues 53-283 (WGKGGVHACS…VHPRKTIKFA (231 aa)) enclose the Radical SAM core domain. Cysteine 71, cysteine 75, and cysteine 78 together coordinate [4Fe-4S] cluster. 3 residues coordinate [2Fe-2S] cluster: cysteine 150, cysteine 211, and lysine 281.

The protein belongs to the radical SAM superfamily. Biotin synthase family. As to quaternary structure, homodimer. Requires [4Fe-4S] cluster as cofactor. [2Fe-2S] cluster serves as cofactor.

It catalyses the reaction (4R,5S)-dethiobiotin + (sulfur carrier)-SH + 2 reduced [2Fe-2S]-[ferredoxin] + 2 S-adenosyl-L-methionine = (sulfur carrier)-H + biotin + 2 5'-deoxyadenosine + 2 L-methionine + 2 oxidized [2Fe-2S]-[ferredoxin]. It functions in the pathway cofactor biosynthesis; biotin biosynthesis; biotin from 7,8-diaminononanoate: step 2/2. In terms of biological role, catalyzes the conversion of dethiobiotin (DTB) to biotin by the insertion of a sulfur atom into dethiobiotin via a radical-based mechanism. This is Biotin synthase from Chlorobium luteolum (strain DSM 273 / BCRC 81028 / 2530) (Pelodictyon luteolum).